The sequence spans 360 residues: uncharacterized protein (360 aa).

The 104-residue stretch at E45 to P148 folds into the THUMP domain.

This is an uncharacterized protein from Methanocaldococcus jannaschii (strain ATCC 43067 / DSM 2661 / JAL-1 / JCM 10045 / NBRC 100440) (Methanococcus jannaschii).